Reading from the N-terminus, the 363-residue chain is 5-formaminoimidazole-4-carboxamide-1-(beta)-D-ribofuranosyl 5'-monophosphate synthetase (363 aa).

The 5-amino-1-(5-phospho-beta-D-ribosyl)imidazole-4-carboxamide site is built by His-29 and Ser-96. The ATP-grasp domain maps to 118-350; the sequence is RDILRWESER…MGRRVAREIR (233 aa). Residues 148–210 and Glu-232 each bind ATP; that span reads PEEI…TNFC. Position 260 (Asn-260) interacts with 5-amino-1-(5-phospho-beta-D-ribosyl)imidazole-4-carboxamide. Mg(2+) contacts are provided by Gln-299 and Glu-312.

Belongs to the phosphohexose mutase family. The cofactor is Mg(2+). It depends on Mn(2+) as a cofactor.

The catalysed reaction is 5-amino-1-(5-phospho-beta-D-ribosyl)imidazole-4-carboxamide + formate + ATP = 5-formamido-1-(5-phospho-D-ribosyl)imidazole-4-carboxamide + ADP + phosphate. The protein operates within purine metabolism; IMP biosynthesis via de novo pathway; 5-formamido-1-(5-phospho-D-ribosyl)imidazole-4-carboxamide from 5-amino-1-(5-phospho-D-ribosyl)imidazole-4-carboxamide (formate route): step 1/1. In terms of biological role, catalyzes the ATP- and formate-dependent formylation of 5-aminoimidazole-4-carboxamide-1-beta-d-ribofuranosyl 5'-monophosphate (AICAR) to 5-formaminoimidazole-4-carboxamide-1-beta-d-ribofuranosyl 5'-monophosphate (FAICAR) in the absence of folates. This is 5-formaminoimidazole-4-carboxamide-1-(beta)-D-ribofuranosyl 5'-monophosphate synthetase from Methanothermobacter thermautotrophicus (strain ATCC 29096 / DSM 1053 / JCM 10044 / NBRC 100330 / Delta H) (Methanobacterium thermoautotrophicum).